The chain runs to 756 residues: 1-phosphatidylinositol 4,5-bisphosphate phosphodiesterase delta-1 (756 aa).

One can recognise a PH domain in the interval 21–130; sequence ALLKGSQLLK…WVLGLHKIIH (110 aa). The substrate binding stretch occupies residues 30–57; the sequence is KVKSSSWRRERFYKLQEDCKTIWQESRK. 2 consecutive EF-hand domains span residues 140–175 and 176–211; these read KLQHWIHSCLRKADKNKDNKMSFKELQNFLKELNIQ and VDDSYARKIFRECDHSQTDSLEDEEIEAFYKMLTQR. Asp153, Asn155, Asp157, Lys159, Glu164, Asp189, Ser191, Thr193, Ser195, and Glu200 together coordinate Ca(2+). Ser191 carries O-linked (GlcNAc) serine glycosylation. O-linked (GlcNAc) threonine glycosylation is present at Thr193. The PI-PLC X-box domain maps to 296–440; it reads QDMGQPLSHY…LKGKILLKGK (145 aa). His311 is a catalytic residue. Ca(2+) contacts are provided by Asn312, Glu341, and Asp343. His356 is an active-site residue. Glu390 contacts Ca(2+). 2 residues coordinate substrate: Lys438 and Lys440. Thr457 carries the post-translational modification Phosphothreonine. Residue Ser460 is modified to Phosphoserine. The region spanning 492–609 is the PI-PLC Y-box domain; it reads LSDMVIYCKS…GYVLKPAFLR (118 aa). Positions 522 and 549 each coordinate substrate. The C2 domain maps to 611-737; it reads PNGTFNPRAL…QGYRHVHLMS (127 aa). Positions 651, 653, 677, 706, 707, and 708 each coordinate Ca(2+).

In terms of assembly, interacts with TGM2. Requires Ca(2+) as cofactor. In terms of tissue distribution, strongly expressed in lung, liver and heart. Also expressed at least in pancreas, kidney, skeletal muscle, placenta and brain.

The catalysed reaction is a 1,2-diacyl-sn-glycero-3-phospho-(1D-myo-inositol-4,5-bisphosphate) + H2O = 1D-myo-inositol 1,4,5-trisphosphate + a 1,2-diacyl-sn-glycerol + H(+). It carries out the reaction a 1,2-diacyl-sn-glycero-3-phospho-(1D-myo-inositol) + H2O = 1D-myo-inositol 1-phosphate + a 1,2-diacyl-sn-glycerol + H(+). The production of the second messenger molecules diacylglycerol (DAG) and inositol 1,4,5-trisphosphate (IP3) is mediated by activated phosphatidylinositol-specific phospholipase C enzymes. Essential for trophoblast and placental development. Binds phosphatidylinositol 4,5-bisphosphate. This chain is 1-phosphatidylinositol 4,5-bisphosphate phosphodiesterase delta-1, found in Homo sapiens (Human).